The chain runs to 1071 residues: Exportin-1 (1071 aa).

The Importin N-terminal domain maps to 46 to 112 (AQEVLTHLKE…KKYVVGLIIK (67 aa)). HEAT repeat units lie at residues 217-240 (QNAP…PLGY), 241-277 (IFET…VSVS), 354-472 (MLLV…YVDT), 515-553 (RFLV…QYPR), 560-597 (KFLK…KCRR), and 602-639 (VQVG…AVGY). Positions 327–450 (CTFLKEHGQL…VREFMKDTDS (124 aa)) are necessary for interaction with Ran and nuclear export complex formation. Serine 391 carries the post-translational modification Phosphoserine. Residues 411 to 481 (TVLSKVRLLM…TEIIMTKKLQ (71 aa)) form a necessary for interaction with RANBP3 region. Lysine 446 is subject to N6-acetyllysine. Threonine 448 is modified (phosphothreonine). Serine 450 is modified (phosphoserine). Tyrosine 454 carries the phosphotyrosine modification. Lysine 693 is subject to N6-acetyllysine. 3 HEAT repeats span residues 775 to 813 (NFVP…KLGG), 885 to 916 (TMRN…SFYQ), and 917 to 954 (TYFC…NLVE). Phosphoserine occurs at positions 966 and 1031. The HEAT 10 repeat unit spans residues 1002–1039 (FSLNQDIPAFKEHLRDFLVQIKEFAGEDTSDLFLEERE).

The protein belongs to the exportin family. As to quaternary structure, found in a U snRNA export complex with PHAX/RNUXA, NCBP1/CBP80, NCBP2/CBP20, RAN, XPO1 and m7G-capped RNA. Component of a nuclear export receptor complex composed of KPNB1, RAN, SNUPN and XPO1. Found in a trimeric export complex with SNUPN, RAN and XPO1. Found in a nuclear export complex with RANBP3 and RAN. Found in a 60S ribosomal subunit export complex with NMD3, RAN, XPO1. Interacts with DDX3X, NMD3, NUP42, NUP88, NUP214, RANBP3 and TERT. Interacts with NEMF (via its N-terminus). Interacts with the monomeric form of BIRC5/survivin deacetylated at 'Lys-129'. Interacts with DTNBP1 and SERTAD2; the interactions translocate DTNBP1 and SERTAD2 out of the nucleus. Interacts with ATF2. Interacts with SLC35G1 and STIM1. Interacts with DCAF8. Interacts with CPEB3. Interacts with HAX1. Interacts with BOK; translocates to the cytoplasm. Interacts with HSP90AB1. Interacts with LRPPRC; interacts with LRPPRC alone and also when LRPPRC is in complex with EIF4E and with EIF4E sensitivity element (4ESE)-containing mRNAs to form an EIF4E-dependent mRNA export complex.

The protein resides in the cytoplasm. It is found in the nucleus. The protein localises to the nucleoplasm. It localises to the cajal body. Its subcellular location is the nucleolus. In terms of biological role, mediates the nuclear export of cellular proteins (cargos) bearing a leucine-rich nuclear export signal (NES) and of RNAs. In the nucleus, in association with RANBP3, binds cooperatively to the NES on its target protein and to the GTPase Ran in its active GTP-bound form. Docking of this complex to the nuclear pore complex (NPC) is mediated through binding to nucleoporins. Upon transit of a nuclear export complex into the cytoplasm, disassembling of the complex and hydrolysis of Ran-GTP to Ran-GDP (induced by RANBP1 and RANGAP1, respectively) cause release of the cargo from the export receptor. The directionality of nuclear export is thought to be conferred by an asymmetric distribution of the GTP- and GDP-bound forms of Ran between the cytoplasm and nucleus. Involved in U3 snoRNA transport from Cajal bodies to nucleoli. Binds to late precursor U3 snoRNA bearing a TMG cap. This Rattus norvegicus (Rat) protein is Exportin-1 (Xpo1).